Reading from the N-terminus, the 335-residue chain is Protein BRASSINAZOLE-RESISTANT 2 (335 aa).

Positions 1–19 are enriched in low complexity; it reads MTSDGATSTSAAAAAAAMA. Disordered regions lie at residues 1-40, 85-122, and 164-190; these read MTSD…RRRR, TYRK…FDSP, and PPLR…KPLP. Positions 22–103 are required for DNA-binding; sequence RKPSWREREN…PGDMAGSSSR (82 aa). Positions 99 to 120 are enriched in polar residues; that stretch reads GSSSRATPYSSHNQSPLSSTFD. Threonine 175 bears the Phosphothreonine mark. A PEST-like region spans residues 231–251; sequence HAPATIPECDESDSSTVDSGH.

The protein belongs to the BZR/LAT61 family. As to quaternary structure, interacts with ASK7/BIN2 through its C-terminal domain and with the bHLH transcription factors BIM1, BIM2 and BIM3 through its C- and N-terminal domains. Interacts (via N-terminus) with REF6 and ELF6. Interacts with MYB30. Interacts with IWS1. Interacts with ASHH2/SDG8. Binds to MYB56 when dephosphorylated in the nucleus of quiescent center (QC) cells. Binds to WRKY46, WRKY54 and WRKY70 to cooperatively regulate the expression of target genes. Phosphorylated by ASK7/BIN2. Phosphorylation increases protein degradation and/or interferes with the nuclear localization. Ubiquitously expressed in cotyledons, leaves, hypocotyls and roots.

It localises to the nucleus. The protein localises to the cytoplasm. Functionally, positive regulator of brassinosteroid (BR) signaling. Transcription factor that activates target gene expression by binding specifically to the DNA sequence 5'-CANNTG-3'(E box) through its N-terminal domain. Can bind individually to the promoter as a homodimer or synergistically as a heterodimer with BIM1, BIM2 or BIM3. The C-terminal domain is probably involved in transcriptional activation. Recruits the transcription elongation factor IWS1 to control BR-regulated gene expression. Forms a trimeric complex with IWS1 and ASHH2/SDG8 to regulate BR-regulated gene expression. Promotes quiescent center (QC) self-renewal by cell divisions in the primary root. Binds to the E-boxes of the BRAVO promoter to repress its expression. The chain is Protein BRASSINAZOLE-RESISTANT 2 from Arabidopsis thaliana (Mouse-ear cress).